A 23-amino-acid polypeptide reads, in one-letter code: Caerin-4.1 (23 aa).

Expressed by the skin parotoid and/or rostral glands.

Its subcellular location is the secreted. Functionally, antibacterial peptide, that adopts an alpha helical conformation which can disrupt bacterial membranes. Each caerin displays a different antimicrobial specificity. The polypeptide is Caerin-4.1 (Ranoidea caerulea (Green tree frog)).